A 347-amino-acid polypeptide reads, in one-letter code: Involucrin (347 aa).

Disordered regions lie at residues 1–43 (MSQQ…LPAP) and 56–347 (PLED…RRSL). The span at 27-36 (ADTQQEQVKQ) shows a compositional bias: polar residues. Low complexity-rich tracts occupy residues 70 to 114 (VPEQ…QQES) and 138 to 161 (DQQQQQESQVQELHVGHHQQQQES). 2 stretches are compositionally biased toward basic and acidic residues: residues 164-173 (QELHVDHHQQ) and 212-221 (QELHVDHHQQ). 2 stretches are compositionally biased toward low complexity: residues 222-241 (QQESQVQELHVDHQQQQQES) and 265-285 (DQQQQELQVQEVQQQQQQQQE). Residues 287–341 (QEDHQKAEHLEQEEAQREQQLKGQLEQEKKGVYQHLDQELTKRDEHLEKKGEHCW) show a composition bias toward basic and acidic residues.

The protein belongs to the involucrin family. Directly or indirectly cross-linked to cornifelin (CNFN). Post-translationally, substrate of transglutaminase. Specific glutamines or lysines are cross-linked to keratins, desmoplakin and to inter involucrin molecules. Keratinocytes of epidermis and other stratified squamous epithelia.

It localises to the cytoplasm. Functionally, part of the insoluble cornified cell envelope (CE) of stratified squamous epithelia. The protein is Involucrin (IVL) of Sus scrofa (Pig).